Here is a 398-residue protein sequence, read N- to C-terminus: Beta-1,4-galactosyltransferase 1 (398 aa).

The Cytoplasmic segment spans residues 1 to 24 (MRLREPLLSGSAAMPGASLQRACR). A helical; Signal-anchor for type II membrane protein transmembrane segment spans residues 25–44 (LLVAVCALHLGVTLVYYLAG). At 45–398 (RDLSRLPQLV…QITVDIGTPS (354 aa)) the chain is on the lumenal side. The span at 61-76 (QGGSNSAAAIGQSSGE) shows a compositional bias: polar residues. The segment at 61–117 (QGGSNSAAAIGQSSGELRTGGARPPPPLGASSQPRPGGDSSPVVDSGPGPASNLTSV) is disordered. Asparagine 113 carries N-linked (GlcNAc...) asparagine glycosylation. An intrachain disulfide couples cysteine 130 to cysteine 172. UDP-alpha-D-galactose is bound by residues 183–187 (PFRNR), 222–224 (FNR), 249–250 (VD), and tryptophan 310. Cysteine 243 and cysteine 262 form a disulfide bridge. Position 250 (aspartate 250) interacts with Mn(2+). Residue 312–315 (GEDD) coordinates N-acetyl-D-glucosamine. Histidine 343 contributes to the Mn(2+) binding site. Residue 343-346 (HSRD) coordinates UDP-alpha-D-galactose. Arginine 355 provides a ligand contact to N-acetyl-D-glucosamine.

This sequence belongs to the glycosyltransferase 7 family. As to quaternary structure, homodimer; and heterodimer with alpha-lactalbumin to form lactose synthase. Interacts (via N-terminal cytoplasmic domain) with UBE2Q1 (via N-terminus); the interaction is direct. The cofactor is Mn(2+). In terms of processing, the soluble form derives from the membrane forms by proteolytic processing. In terms of tissue distribution, ubiquitously expressed, but at very low levels in fetal and adult brain.

It localises to the golgi apparatus. The protein resides in the golgi stack membrane. The protein localises to the cell membrane. It is found in the cell surface. Its subcellular location is the cell projection. It localises to the filopodium. The protein resides in the secreted. It carries out the reaction D-glucose + UDP-alpha-D-galactose = lactose + UDP + H(+). The enzyme catalyses an N-acetyl-beta-D-glucosaminyl derivative + UDP-alpha-D-galactose = a beta-D-galactosyl-(1-&gt;4)-N-acetyl-beta-D-glucosaminyl derivative + UDP + H(+). The catalysed reaction is N-acetyl-D-glucosamine + UDP-alpha-D-galactose = beta-D-galactosyl-(1-&gt;4)-N-acetyl-D-glucosamine + UDP + H(+). It catalyses the reaction a beta-D-GlcNAc-(1-&gt;3)-beta-D-Gal-(1-&gt;4)-beta-D-Glc-(1&lt;-&gt;1)-Cer(d18:1(4E)) + UDP-alpha-D-galactose = a neolactoside nLc4Cer(d18:1(4E)) + UDP + H(+). It carries out the reaction a beta-D-glucosylceramide + UDP-alpha-D-galactose = a beta-D-galactosyl-(1-&gt;4)-beta-D-glucosyl-(1&lt;-&gt;1)-ceramide + UDP + H(+). The enzyme catalyses a neolactoside IV(3)-beta-GlcNAc-nLc4Cer + UDP-alpha-D-galactose = a neolactoside nLc6Cer + UDP + H(+). Its pathway is protein modification; protein glycosylation. The Golgi complex form catalyzes the production of lactose in the lactating mammary gland and could also be responsible for the synthesis of complex-type N-linked oligosaccharides in many glycoproteins as well as the carbohydrate moieties of glycolipids. Its function is as follows. The cell surface form functions as a recognition molecule during a variety of cell to cell and cell to matrix interactions, as those occurring during development and egg fertilization, by binding to specific oligosaccharide ligands on opposing cells or in the extracellular matrix. The sequence is that of Beta-1,4-galactosyltransferase 1 from Homo sapiens (Human).